Consider the following 509-residue polypeptide: Putative ATP-dependent RNA helicase QP509L (509 aa).

In terms of domain architecture, Helicase ATP-binding spans 110–262 (KKLLPPYGRF…KIIIHHLGQP (153 aa)). 123 to 130 (LNTGLGKT) is a binding site for ATP. Residues 215–218 (DEAH) carry the DEAH box motif.

It belongs to the DEAD box helicase family. DEAH subfamily.

It catalyses the reaction ATP + H2O = ADP + phosphate + H(+). This chain is Putative ATP-dependent RNA helicase QP509L, found in African swine fever virus (isolate Tick/Malawi/Lil 20-1/1983) (ASFV).